The sequence spans 525 residues: AarF domain-containing protein kinase 1 (525 aa).

A Protein kinase domain is found at 148 to 477; sequence SFDDTPLGAA…HKKRDAGSFF (330 aa). ATP-binding positions include 154-162 and lysine 176; that span reads LGAASLAQV. Aspartate 308 functions as the Proton acceptor in the catalytic mechanism.

It belongs to the protein kinase superfamily. ADCK protein kinase family.

It is found in the mitochondrion. Appears to be essential for maintaining mitochondrial cristae formation and mitochondrial function by acting via YME1L1 in a kinase-independent manner to regulate essential mitochondrial structural proteins OPA1 and IMMT. The action of this enzyme is not yet clear. It is not known if it has protein kinase activity and what type of substrate it would phosphorylate (Ser, Thr or Tyr). The sequence is that of AarF domain-containing protein kinase 1 (Adck1) from Mus musculus (Mouse).